A 343-amino-acid polypeptide reads, in one-letter code: Holliday junction branch migration complex subunit RuvB (343 aa).

Residues 1–186 (MVMARKSDTL…FQIQERLEYY (186 aa)) form a large ATPase domain (RuvB-L) region. ATP is bound by residues Leu-25, Arg-26, Gly-67, Lys-70, Thr-71, Ser-72, 133–135 (EDF), Arg-176, Tyr-186, and Arg-223. Thr-71 provides a ligand contact to Mg(2+). Residues 187 to 257 (DAKALESILH…LAQKSLDRLG (71 aa)) are small ATPAse domain (RuvB-S). A head domain (RuvB-H) region spans residues 260–343 (ASGLDSMDRK…PPPTPQGSLF (84 aa)). Residues Arg-296, Arg-315, and Arg-320 each coordinate DNA.

Belongs to the RuvB family. In terms of assembly, homohexamer. Forms an RuvA(8)-RuvB(12)-Holliday junction (HJ) complex. HJ DNA is sandwiched between 2 RuvA tetramers; dsDNA enters through RuvA and exits via RuvB. An RuvB hexamer assembles on each DNA strand where it exits the tetramer. Each RuvB hexamer is contacted by two RuvA subunits (via domain III) on 2 adjacent RuvB subunits; this complex drives branch migration. In the full resolvosome a probable DNA-RuvA(4)-RuvB(12)-RuvC(2) complex forms which resolves the HJ.

The protein resides in the cytoplasm. The enzyme catalyses ATP + H2O = ADP + phosphate + H(+). Its function is as follows. The RuvA-RuvB-RuvC complex processes Holliday junction (HJ) DNA during genetic recombination and DNA repair, while the RuvA-RuvB complex plays an important role in the rescue of blocked DNA replication forks via replication fork reversal (RFR). RuvA specifically binds to HJ cruciform DNA, conferring on it an open structure. The RuvB hexamer acts as an ATP-dependent pump, pulling dsDNA into and through the RuvAB complex. RuvB forms 2 homohexamers on either side of HJ DNA bound by 1 or 2 RuvA tetramers; 4 subunits per hexamer contact DNA at a time. Coordinated motions by a converter formed by DNA-disengaged RuvB subunits stimulates ATP hydrolysis and nucleotide exchange. Immobilization of the converter enables RuvB to convert the ATP-contained energy into a lever motion, pulling 2 nucleotides of DNA out of the RuvA tetramer per ATP hydrolyzed, thus driving DNA branch migration. The RuvB motors rotate together with the DNA substrate, which together with the progressing nucleotide cycle form the mechanistic basis for DNA recombination by continuous HJ branch migration. Branch migration allows RuvC to scan DNA until it finds its consensus sequence, where it cleaves and resolves cruciform DNA. In Myxococcus xanthus (strain DK1622), this protein is Holliday junction branch migration complex subunit RuvB.